The sequence spans 258 residues: UPF0758 protein BamMC406_2419 (258 aa).

The disordered stretch occupies residues 13 to 42; sequence CRDPADAPAAPARHTGPARPRKRRPRNWKP. A compositionally biased stretch (basic residues) spans 31–42; sequence RPRKRRPRNWKP. The region spanning 136–258 is the MPN domain; the sequence is QIDSPGAVED…TFSFARAGWL (123 aa). Residues His207, His209, and Asp220 each coordinate Zn(2+). The JAMM motif signature appears at 207-220; the sequence is HNHPSGAVQPSAED.

This sequence belongs to the UPF0758 family.

This is UPF0758 protein BamMC406_2419 from Burkholderia ambifaria (strain MC40-6).